We begin with the raw amino-acid sequence, 198 residues long: Dual specificity protein phosphatase 13B (198 aa).

Residues His45 to Arg193 form the Tyrosine-protein phosphatase domain. The active-site Phosphocysteine intermediate is Cys138.

The protein belongs to the protein-tyrosine phosphatase family. Non-receptor class dual specificity subfamily. As to expression, most abundantly expressed in the testis.

The catalysed reaction is O-phospho-L-tyrosyl-[protein] + H2O = L-tyrosyl-[protein] + phosphate. It catalyses the reaction O-phospho-L-seryl-[protein] + H2O = L-seryl-[protein] + phosphate. The enzyme catalyses O-phospho-L-threonyl-[protein] + H2O = L-threonyl-[protein] + phosphate. Dual specificity phosphatase that dephosphorylates MAPK8/JNK and MAPK14/p38, but not MAPK1/ERK2, in vitro. Exhibits intrinsic phosphatase activity towards both phospho-seryl/threonyl and -tyrosyl residues, with similar specific activities in vitro. This Mus musculus (Mouse) protein is Dual specificity protein phosphatase 13B.